Consider the following 317-residue polypeptide: Zinc transporter ZIP3 (317 aa).

Topologically, residues 1–3 are extracellular; sequence MTK. Residues 4 to 24 traverse the membrane as a helical segment; that stretch reads LLVAKVLCMVGVFFFMLLGSL. The Cytoplasmic segment spans residues 25–42; the sequence is LPVKVIEADLEKAHRSKK. Residues 43–63 form a helical membrane-spanning segment; the sequence is VLSLCNTFGGGVFLATCFNAL. The Extracellular segment spans residues 64–85; sequence LPAVRDKLQQVLSLGHISTDYP. A helical membrane pass occupies residues 86 to 106; sequence LAETLMMVGFFLTVFVEQLVL. Over 107-172 the chain is Cytoplasmic; it reads TFRRERPPFI…RELGRPGPLR (66 aa). Phosphoserine is present on residues serine 125 and serine 129. Residues 173 to 193 form a helical membrane-spanning segment; the sequence is LLSLVFALSAHSVFEGLALGL. The Extracellular segment spans residues 194–199; it reads QEEGER. A helical transmembrane segment spans residues 200-220; sequence VVSLFVGVAIHETLVAVALGI. Over 221–232 the chain is Cytoplasmic; that stretch reads SMARSAVPLRDA. A helical membrane pass occupies residues 233–253; sequence AKLAVTVSAMIPVGIGLGLGI. Residues 254–265 are Extracellular-facing; it reads ESARSVASSVAS. Residues 266–286 form a helical membrane-spanning segment; the sequence is ALLQGLAGGTFLFVTFLEILA. Residues 287-294 lie on the Cytoplasmic side of the membrane; that stretch reads KELEERSE. The chain crosses the membrane as a helical span at residues 295–315; it reads QLLKVLFLVLGYAVLAGMVFL. At 316–317 the chain is on the extracellular side; that stretch reads KW.

It belongs to the ZIP transporter (TC 2.A.5) family. Highly expressed in the testes. Highly expressed in dentate gyrus granule cells of the hippocampus. Expressed in the mammary gland.

It localises to the cell membrane. The protein localises to the apical cell membrane. The enzyme catalyses Zn(2+)(in) = Zn(2+)(out). Transporter for the divalent cation Zn(2+). Mediates the influx of Zn(2+) into cells from extracellular space. Controls Zn(2+) accumulation into dentate gyrus granule cells in the hippocampus. Mediates Zn(2+) reuptake from the secreted milk within the alveolar lumen. In Mus musculus (Mouse), this protein is Zinc transporter ZIP3 (Slc39a3).